The sequence spans 121 residues: Heme-degrading monooxygenase (121 aa).

Positions Ile-2–Val-101 constitute an ABM domain. Asn-6 contacts Fe cation. Residues Lys-76–Lys-98 are disordered. The segment covering Asp-78–Lys-98 has biased composition (basic and acidic residues). Position 84 (His-84) interacts with heme.

This sequence belongs to the antibiotic biosynthesis monooxygenase family. Heme-degrading monooxygenase IsdG subfamily. Homodimer.

The protein localises to the cytoplasm. It catalyses the reaction heme b + 3 reduced [NADPH--hemoprotein reductase] + 3 O2 = biliverdin IXalpha + CO + Fe(2+) + 3 oxidized [NADPH--hemoprotein reductase] + 3 H2O + H(+). Its function is as follows. Allows bacterial pathogens to use the host heme as an iron source. Catalyzes the oxidative degradation of the heme macrocyclic porphyrin ring to the biliverdin in the presence of a suitable electron donor such as ascorbate or NADPH--cytochrome P450 reductase, with subsequent release of free iron. This Listeria welshimeri serovar 6b (strain ATCC 35897 / DSM 20650 / CCUG 15529 / CIP 8149 / NCTC 11857 / SLCC 5334 / V8) protein is Heme-degrading monooxygenase.